We begin with the raw amino-acid sequence, 130 residues long: Protein ApaG (130 aa).

Residues 3–127 form the ApaG domain; sequence RAVTRGIEVS…FSLDIPEQRR (125 aa).

The protein is Protein ApaG of Brucella anthropi (strain ATCC 49188 / DSM 6882 / CCUG 24695 / JCM 21032 / LMG 3331 / NBRC 15819 / NCTC 12168 / Alc 37) (Ochrobactrum anthropi).